The chain runs to 225 residues: Uracil-DNA glycosylase (225 aa).

The active-site Proton acceptor is Asp67.

Belongs to the uracil-DNA glycosylase (UDG) superfamily. UNG family.

It is found in the cytoplasm. It catalyses the reaction Hydrolyzes single-stranded DNA or mismatched double-stranded DNA and polynucleotides, releasing free uracil.. Functionally, excises uracil residues from the DNA which can arise as a result of misincorporation of dUMP residues by DNA polymerase or due to deamination of cytosine. This chain is Uracil-DNA glycosylase, found in Coxiella burnetii (strain Dugway 5J108-111).